The sequence spans 398 residues: Selenide, water dikinase (398 aa).

Residues 1–21 (MSHKRPQSSAGESNGAVDLKT) form a disordered region. Cysteine 46 is a catalytic residue. Residues lysine 49, 72-74 (GMD), aspartate 97, aspartate 120, and 171-174 (GGQT) each bind ATP. A Mg(2+)-binding site is contributed by aspartate 74. Residue aspartate 120 participates in Mg(2+) binding. Aspartate 278 contributes to the Mg(2+) binding site.

It belongs to the selenophosphate synthase 1 family. Class I subfamily. In terms of assembly, homodimer. Requires Mg(2+) as cofactor.

It catalyses the reaction hydrogenselenide + ATP + H2O = selenophosphate + AMP + phosphate + 2 H(+). Functionally, synthesizes selenophosphate from selenide and ATP. The sequence is that of Selenide, water dikinase from Leishmania major.